The chain runs to 31 residues: Kallikrein-1 (31 aa).

Positions 1–31 (VIGGQECARDSHPWQAAVYHFSDIECGGVLV) constitute a Peptidase S1 domain.

The protein belongs to the peptidase S1 family. Kallikrein subfamily.

The catalysed reaction is Preferential cleavage of Arg-|-Xaa bonds in small molecule substrates. Highly selective action to release kallidin (lysyl-bradykinin) from kininogen involves hydrolysis of Met-|-Xaa or Leu-|-Xaa.. Functionally, glandular kallikreins cleave Met-Lys and Arg-Ser bonds in kininogen to release Lys-bradykinin. The chain is Kallikrein-1 from Cavia porcellus (Guinea pig).